The sequence spans 1045 residues: Tyrosine-protein kinase-like otk (1045 aa).

Residues 1–25 (MPIVMDMNMLLMLSLAFTVMAPASA) form the signal peptide. Ig-like C2-type domains are found at residues 26-116 (SSSR…AKLS), 115-200 (LSVI…RVMS), 260-373 (PEGL…APVN), 376-469 (PGAL…VAIN), and 474-564 (PRFS…VRLL). Over 26–587 (SSSRFTQPPQ…AGDGFLVTRA (562 aa)) the chain is Extracellular. Intrachain disulfides connect C49–C97, C139–C189, C285–C362, and C406–C453. Residues N344, N424, N435, N442, N450, N463, N518, and N530 are each glycosylated (N-linked (GlcNAc...) asparagine). The cysteines at positions 496 and 548 are disulfide-linked. A helical transmembrane segment spans residues 588-608 (VLITMTVALAYIVLVVGLMLW). Residues 609–1045 (CRYRRQARKA…LSKAMQAAEK (437 aa)) lie on the Cytoplasmic side of the membrane. The interval 628 to 676 (AGGDQAESGKNTEQEPCLSKQRNGHGKSRTAANGDAQKSDDTACSQQSK) is disordered. Position 681 is a phosphoserine (S681). The Protein kinase; inactive domain occupies 695-1040 (LSELIQIGRG…QLGAALSKAM (346 aa)). Residues 722-790 (ASPSDKDADT…QPQEQAQSES (69 aa)) form a disordered region. Over residues 725-736 (SDKDADTEKQHS) the composition is skewed to basic and acidic residues. Residues 743–752 (GASGASGCGS) show a composition bias toward gly residues. Residues 771–782 (DDIEEIKEEEQP) are compositionally biased toward acidic residues.

This sequence belongs to the protein kinase superfamily. Tyr protein kinase family. Insulin receptor subfamily. In terms of assembly, interacts with plexA; component of a receptor complex that mediates the repulsive signaling in response to Semaphorin ligands.

The protein localises to the cell membrane. Functionally, acts as a calcium-dependent, homophilic cell adhesion molecule that regulates neural recognition during the development of the nervous system. Component of the repulsive Plexin signaling response to regulate motor axon guidance at the embryonic stage. Also component of a receptor complex that is required in the adult visual system to innervate the lamina layer; specific targeting of R1-R6 axons. The protein is Tyrosine-protein kinase-like otk of Drosophila mojavensis (Fruit fly).